We begin with the raw amino-acid sequence, 267 residues long: Ras-related protein Rab-36 (267 aa).

8 residues coordinate GTP: Val-68, Gly-69, Lys-70, Thr-71, Ser-72, Asp-83, Tyr-86, and Thr-89. A Mg(2+)-binding site is contributed by Thr-71. The Switch 1 motif lies at 76 to 94; sequence RLCKNVFDHDYKATIGVDF. The Mg(2+) site is built by Thr-89 and Asp-112. A Switch 2 motif is present at residues 113–132; the sequence is TAGQEKFKCIASAYYRGAQV. GTP is bound by residues Gly-115, Lys-172, Asp-174, Ser-203, Ala-204, and Lys-205. Residues Cys-266 and Cys-267 are each lipidated (S-geranylgeranyl cysteine).

This sequence belongs to the small GTPase superfamily. Rab family. Requires Mg(2+) as cofactor.

It is found in the golgi apparatus membrane. The enzyme catalyses GTP + H2O = GDP + phosphate + H(+). With respect to regulation, regulated by guanine nucleotide exchange factors (GEFs) which promote the exchange of bound GDP for free GTP. Regulated by GTPase activating proteins (GAPs) which increase the GTP hydrolysis activity. Inhibited by GDP dissociation inhibitors (GDIs). Its function is as follows. The small GTPases Rab are key regulators of intracellular membrane trafficking, from the formation of transport vesicles to their fusion with membranes. Rabs cycle between an inactive GDP-bound form and an active GTP-bound form that is able to recruit to membranes different sets of downstream effectors directly responsible for vesicle formation, movement, tethering and fusion. The polypeptide is Ras-related protein Rab-36 (Mus musculus (Mouse)).